Here is a 118-residue protein sequence, read N- to C-terminus: MASLILGAPPRVTVALPSSRLSSSHSETAGVSLSCFTHQFSLSTSSSSSIPLVYCGRGDRKTAKGKRFNHSFGNARPRNKSKGRGPERVPVPPAPPRKDKFENDEKIKIDIDESLFSN.

Residues 1–55 (MASLILGAPPRVTVALPSSRLSSSHSETAGVSLSCFTHQFSLSTSSSSSIPLVYC) constitute a chloroplast transit peptide. Positions 61 to 118 (KTAKGKRFNHSFGNARPRNKSKGRGPERVPVPPAPPRKDKFENDEKIKIDIDESLFSN) are disordered. Over residues 96-111 (PRKDKFENDEKIKIDI) the composition is skewed to basic and acidic residues. Serine 117 carries the phosphoserine modification.

The protein belongs to the bacterial ribosomal protein bTHX family. In terms of assembly, part of the 30S ribosomal subunit.

The protein resides in the plastid. The protein localises to the chloroplast. The chain is Small ribosomal subunit protein bTHXc (RPS31) from Arabidopsis thaliana (Mouse-ear cress).